A 358-amino-acid polypeptide reads, in one-letter code: DnaJ homolog subfamily B member 11 (358 aa).

Positions methionine 1 to alanine 22 are cleaved as a signal peptide. The 66-residue stretch at aspartate 25–glycine 90 folds into the J domain. Threonine 188 is modified (phosphothreonine). The N-linked (GlcNAc...) asparagine glycan is linked to asparagine 261.

In terms of assembly, part of a large chaperone multiprotein complex comprising DNAJB11, HSP90B1, HSPA5, HYOU, PDIA2, PDIA4, PDIA6, PPIB, SDF2L1, UGGT1 and very small amounts of ERP29, but not, or at very low levels, CALR nor CANX. Binds to denatured substrates in an ATP-independent manner. Interacts via the J domain with HSPA5 in an ATP-dependent manner. Contains high-mannose Endo H-sensitive carbohydrates. Post-translationally, cys-169, Cys-171, Cys-193 and Cys-196 form intramolecular disulfide bonds. The preferential partner for each Cys is not known. In terms of processing, thr-188 was reported to be phosphorylated upon DNA damage by ATM or ATR; however as this position has been shown to be in the ER lumen, the in vivo relevance is not proven. Widely expressed.

It localises to the endoplasmic reticulum lumen. In terms of biological role, as a co-chaperone for HSPA5 it is required for proper folding, trafficking or degradation of proteins. Binds directly to both unfolded proteins that are substrates for ERAD and nascent unfolded peptide chains, but dissociates from the HSPA5-unfolded protein complex before folding is completed. May help recruiting HSPA5 and other chaperones to the substrate. Stimulates HSPA5 ATPase activity. It is necessary for maturation and correct trafficking of PKD1. In Homo sapiens (Human), this protein is DnaJ homolog subfamily B member 11 (DNAJB11).